Here is a 436-residue protein sequence, read N- to C-terminus: Adenylosuccinate synthetase (436 aa).

Residues 12–18 (GDEGKGK) and 40–42 (GHT) contribute to the GTP site. The Proton acceptor role is filled by D13. Residues D13 and G40 each contribute to the Mg(2+) site. Residues 13–16 (DEGK), 38–41 (NAGH), T128, R142, Q223, T238, and R302 each bind IMP. Catalysis depends on H41, which acts as the Proton donor. A substrate-binding site is contributed by 298-304 (TTTGRRR). Residues R304, 330–332 (KLD), and 412–414 (SLG) each bind GTP.

This sequence belongs to the adenylosuccinate synthetase family. As to quaternary structure, homodimer. Mg(2+) serves as cofactor.

The protein localises to the cytoplasm. The catalysed reaction is IMP + L-aspartate + GTP = N(6)-(1,2-dicarboxyethyl)-AMP + GDP + phosphate + 2 H(+). Its pathway is purine metabolism; AMP biosynthesis via de novo pathway; AMP from IMP: step 1/2. In terms of biological role, plays an important role in the de novo pathway of purine nucleotide biosynthesis. Catalyzes the first committed step in the biosynthesis of AMP from IMP. The chain is Adenylosuccinate synthetase from Prochlorococcus marinus (strain MIT 9515).